The primary structure comprises 205 residues: Small ribosomal subunit protein uS4c (205 aa).

Positions 93-156 (MRLDNTVFRL…KSRNLVLNNL (64 aa)) constitute an S4 RNA-binding domain.

Belongs to the universal ribosomal protein uS4 family. In terms of assembly, part of the 30S ribosomal subunit. Contacts protein S5. The interaction surface between S4 and S5 is involved in control of translational fidelity.

The protein resides in the plastid. The protein localises to the chloroplast. Its function is as follows. One of the primary rRNA binding proteins, it binds directly to 16S rRNA where it nucleates assembly of the body of the 30S subunit. Functionally, with S5 and S12 plays an important role in translational accuracy. In Mesostigma viride (Green alga), this protein is Small ribosomal subunit protein uS4c (rps4).